The primary structure comprises 279 residues: Presqualene diphosphate synthase (279 aa).

It belongs to the phytoene/squalene synthase family. HpnD subfamily.

It catalyses the reaction 2 (2E,6E)-farnesyl diphosphate = presqualene diphosphate + diphosphate. It functions in the pathway secondary metabolite biosynthesis; hopanoid biosynthesis. In terms of biological role, involved in the biosynthesis of the hopanoid precursor squalene (SQ) from farnesyl diphosphate (FPP). Catalyzes the first step, the formation of presqualene diphosphate (PSPP) from two molecules of FPP. In Rhodopseudomonas palustris (strain ATCC BAA-98 / CGA009), this protein is Presqualene diphosphate synthase.